We begin with the raw amino-acid sequence, 140 residues long: Transmembrane protein 107 (140 aa).

2 consecutive transmembrane segments (helical) span residues 7-27 (LVPS…TIFW) and 53-73 (LIIA…GFLS). The N-linked (GlcNAc...) asparagine glycan is linked to asparagine 79. The next 2 membrane-spanning stretches (helical) occupy residues 84–104 (LLSV…LFEG) and 113–133 (IMSF…IAVF).

It localises to the membrane. Its function is as follows. May play a role in cilia formation and embryonic patterning. In Xenopus laevis (African clawed frog), this protein is Transmembrane protein 107 (tmem107).